Here is a 114-residue protein sequence, read N- to C-terminus: Phosphoribosyl-ATP pyrophosphatase (114 aa).

The protein belongs to the PRA-PH family.

It is found in the cytoplasm. It catalyses the reaction 1-(5-phospho-beta-D-ribosyl)-ATP + H2O = 1-(5-phospho-beta-D-ribosyl)-5'-AMP + diphosphate + H(+). It functions in the pathway amino-acid biosynthesis; L-histidine biosynthesis; L-histidine from 5-phospho-alpha-D-ribose 1-diphosphate: step 2/9. The protein is Phosphoribosyl-ATP pyrophosphatase of Leuconostoc mesenteroides subsp. mesenteroides (strain ATCC 8293 / DSM 20343 / BCRC 11652 / CCM 1803 / JCM 6124 / NCDO 523 / NBRC 100496 / NCIMB 8023 / NCTC 12954 / NRRL B-1118 / 37Y).